The sequence spans 267 residues: Transcription factor Spi-B (267 aa).

The TAD1 (Acidic) stretch occupies residues 1–31; the sequence is MLALEAAQLDGPHLSCLYPEGVFYDLDSCKP. The interval 41–62 is TAD2; sequence LDSTWGWTEAPPAPAIAPYEAF. A DNA-binding region (ETS) is located at residues 174 to 257; sequence LRLYQFLLGL…VKRKLTYQFD (84 aa).

Belongs to the ETS family. As to quaternary structure, can form homotypic interactions. Interacts with IRF4/Pip. Interacts with JUN. Interacts with TBP. May also interact with CREBBP and EP300. Interacts with NONO/p54(nrb). As to expression, expressed in the medulla of the thymus, the spleen and germinal centers of the lymph nodes. Expressed in B-cells and T-cells, expression increases during B-cell maturation and decreases during T-cell maturation.

It is found in the nucleus. Its function is as follows. Sequence specific transcriptional activator which binds to the PU-box, a purine-rich DNA sequence (5'-GAGGAA-3') that can act as a lymphoid-specific enhancer. Promotes development of plasmacytoid dendritic cells (pDCs), also known as type 2 DC precursors (pre-DC2) or natural interferon (IFN)-producing cells. These cells have the capacity to produce large amounts of interferon and block viral replication. Required for B-cell receptor (BCR) signaling, which is necessary for normal B-cell development and antigenic stimulation. This chain is Transcription factor Spi-B (Spib), found in Mus musculus (Mouse).